Consider the following 726-residue polypeptide: MAR-binding filament-like protein 1 (726 aa).

A chloroplast-targeting transit peptide spans 1 to 41 (MGFLIGGSCFVPSVPLHSRFLSSPSSSSSSSPSSSQFGLLC). A thylakoid-targeting transit peptide spans 42–95 (SSNVAKFKRRRPTLASLNQEDGYEYDVASAKRRAFLLVGISVLPFLQLRSPALA). At 96–124 (DERGNEIKTSKVDLETEVAVVSEGTSPNP) the chain is on the lumenal, thylakoid side. The helical transmembrane segment at 125–145 (FLALLNGLGIFSAGVLGALYA) threads the bilayer. Positions 144-691 (YALARQDTKA…KGEILRMRSQ (548 aa)) form a coiled coil. Over 146–726 (LARQDTKAAE…VRRRKSSTSS (581 aa)) the chain is Stromal. The segment at 678–726 (LGSAKGEILRMRSQPDSVKAVNSTDNKEKSDNTVTVKKVVRRRKSSTSS) is disordered. The segment covering 691-701 (QPDSVKAVNST) has biased composition (polar residues). A Nuclear localization signal motif is present at residues 715 to 722 (KVVRRRKS). Positions 715–726 (KVVRRRKSSTSS) are enriched in basic residues.

Interacts with PTST2; the interaction is essential for the initiation of starch granules biosynthesis in leaf chloroplasts, for the correct location of the process in the stromal spaces between the thylakoid membranes, and for the association of PTST2 with the thylakoid membranes. Predicted to be translocated into the thylakoid by the Tat system. The position of the transit peptide cleavages have not been experimentally proven.

The protein resides in the plastid. Its subcellular location is the chloroplast. It is found in the chloroplast thylakoid membrane. It localises to the chloroplast stroma. The protein localises to the chloroplast nucleoid. The protein resides in the nucleus. Its subcellular location is the nucleus matrix. DNA-binding protein required for the initiation of starch granules biosynthesis in leaf chloroplasts. Anchored to the thylakoid membranes with its C-terminus facing into the stroma where it is essential for localizing PTST2 and SS4 to the stromal spaces between the thylakoid membranes in order to begin starch granule formation. Associated with leaf chloroplastic nucleoids in vivo. Binds to various chloroplastic double-stranded DNA fragments without particular sequence specificity in vitro. May function at the interface between nucleoids and thylakoids possibly by anchoring nucleoids to the thylakoid membrane system in mature chloroplasts. Likely to participate in nuclear architecture by connecting chromatin with the nuclear matrix and potentially with the nuclear envelope. This chain is MAR-binding filament-like protein 1, found in Arabidopsis thaliana (Mouse-ear cress).